The primary structure comprises 107 residues: U1-lycotoxin-Ls1k (107 aa).

An N-terminal signal peptide occupies residues 1-20 (MMKVLVVVALLVTLISYSSS). Residues 21-41 (EGIDDLEADELLSLMANEQTR) constitute a propeptide that is removed on maturation. 4 cysteine pairs are disulfide-bonded: Cys-44-Cys-59, Cys-51-Cys-68, Cys-58-Cys-86, and Cys-70-Cys-84.

It belongs to the neurotoxin 19 (CSTX) family. 04 (U1-Lctx) subfamily. Expressed by the venom gland.

It localises to the secreted. The sequence is that of U1-lycotoxin-Ls1k from Lycosa singoriensis (Wolf spider).